Here is a 480-residue protein sequence, read N- to C-terminus: MALTLGTKKKVCYYYDGDVGNYYYGQGHPMKPHRIRMTHNLLLNYGLYRKMEIFRPHKASAEDMTKYHSDDYIKFLRSIRPDNMSEYSKQMQRFNVGEDCPVFDGLFEFCQLSAGGSVASAVKLNKQQTDISVNWSGGLHHAKKSEASGFCYVNDIVLAILELLKYHQRVVYIDIDIHHGDGVEEAFYTTDRVMTVSFHKYGEYFPGTGDLRDIGAGKGKYYAVNYALRDGIDDESYEAIFKPVMSKVMEMFQPSAVVLQCGADSLSGDRLGCFNLTIKGHAKCVEFIKTFNLPLLMLGGGGYTIRNVARCWTYETAVALDSEIPNELPYNDYFEYFGPDFKLHISPSNMTNQNTNEYLEKIKQRLFENLRMLPHAPGVQMQAVAEDSIHDDSGEEDEDDPDKRISIRSSDKRIACDEEFSDSEDEGEGGRKNVANFKKVKRVKTEEEKEGEDKKDVKEEEKAKDEKTDSKRVKEETKSV.

The histone deacetylase stretch occupies residues 10–321 (KVCYYYDGDV…WTYETAVALD (312 aa)). His-141 is a catalytic residue. Positions 388–480 (SIHDDSGEED…KRVKEETKSV (93 aa)) are disordered. The segment covering 401 to 416 (PDKRISIRSSDKRIAC) has biased composition (basic and acidic residues). The segment covering 417-427 (DEEFSDSEDEG) has biased composition (acidic residues). Over residues 443-480 (VKTEEEKEGEDKKDVKEEEKAKDEKTDSKRVKEETKSV) the composition is skewed to basic and acidic residues.

The protein belongs to the histone deacetylase family. HD type 1 subfamily. In terms of assembly, part of a large multiprotein complex that also contains RBBP4. In terms of tissue distribution, oocyte.

The protein localises to the nucleus. The protein resides in the cytoplasm. The catalysed reaction is N(6)-acetyl-L-lysyl-[histone] + H2O = L-lysyl-[histone] + acetate. It catalyses the reaction N(6)-acetyl-L-lysyl-[protein] + H2O = L-lysyl-[protein] + acetate. It carries out the reaction N(6)-(2E)-butenoyl-L-lysyl-[protein] + H2O = (2E)-2-butenoate + L-lysyl-[protein]. Histone deacetylase that catalyzes the deacetylation of lysine residues on the N-terminal part of the core histones (H2A, H2B, H3 and H4). Histone deacetylation gives a tag for epigenetic repression and plays an important role in transcriptional regulation, cell cycle progression and developmental events. Histone deacetylases act via the formation of large multiprotein complexes. Also functions as deacetylase for non-histone proteins. In addition to protein deacetylase activity, also has protein-lysine deacylase activity: acts as a protein decrotonylase by mediating decrotonylation ((2E)-butenoyl) of histones. This Xenopus laevis (African clawed frog) protein is Probable histone deacetylase 1-A (hdac1-a).